The chain runs to 466 residues: tRNA-2-methylthio-N(6)-dimethylallyladenosine synthase (466 aa).

The 121-residue stretch at 3-123 (KKLYIKTYGC…LPEMVARAVR (121 aa)) folds into the MTTase N-terminal domain. [4Fe-4S] cluster is bound by residues Cys12, Cys48, Cys86, Cys162, Cys166, and Cys169. A Radical SAM core domain is found at 148–381 (SPAGPSAFLS…QQLLTAQQTA (234 aa)). The TRAM domain maps to 384–446 (TACVGRVQPV…ANSLSGTVVV (63 aa)).

It belongs to the methylthiotransferase family. MiaB subfamily. As to quaternary structure, monomer. [4Fe-4S] cluster serves as cofactor.

It is found in the cytoplasm. The catalysed reaction is N(6)-dimethylallyladenosine(37) in tRNA + (sulfur carrier)-SH + AH2 + 2 S-adenosyl-L-methionine = 2-methylsulfanyl-N(6)-dimethylallyladenosine(37) in tRNA + (sulfur carrier)-H + 5'-deoxyadenosine + L-methionine + A + S-adenosyl-L-homocysteine + 2 H(+). Catalyzes the methylthiolation of N6-(dimethylallyl)adenosine (i(6)A), leading to the formation of 2-methylthio-N6-(dimethylallyl)adenosine (ms(2)i(6)A) at position 37 in tRNAs that read codons beginning with uridine. This chain is tRNA-2-methylthio-N(6)-dimethylallyladenosine synthase, found in Rhodospirillum centenum (strain ATCC 51521 / SW).